The chain runs to 150 residues: Deoxyuridine 5'-triphosphate nucleotidohydrolase (150 aa).

Substrate-binding positions include Arg67 to Ser69, Asn80, and Val84 to Asp86.

It belongs to the dUTPase family. Requires Mg(2+) as cofactor.

It catalyses the reaction dUTP + H2O = dUMP + diphosphate + H(+). Its pathway is pyrimidine metabolism; dUMP biosynthesis; dUMP from dCTP (dUTP route): step 2/2. This enzyme is involved in nucleotide metabolism: it produces dUMP, the immediate precursor of thymidine nucleotides and it decreases the intracellular concentration of dUTP so that uracil cannot be incorporated into DNA. The sequence is that of Deoxyuridine 5'-triphosphate nucleotidohydrolase (dut) from Lactococcus lactis subsp. lactis (strain IL1403) (Streptococcus lactis).